Reading from the N-terminus, the 41-residue chain is Large ribosomal subunit protein bL36B (41 aa).

Belongs to the bacterial ribosomal protein bL36 family.

The polypeptide is Large ribosomal subunit protein bL36B (Actinobacillus pleuropneumoniae serotype 5b (strain L20)).